A 504-amino-acid chain; its full sequence is MKIKTDEVTSVLKQEIKNFKKDLQVEEVGTVLEVGDGIARVYGLTNVMSGELVEFQNGVRGQAFNLEENSVGVVIFGDYIKIEEGFSVKRVGKIFEVPVGPELLGRVLNPLGEVIDGKGPLNAKKTRPVESPAPGIAMRKSVHEPMQTGIKAIDAMIPIGRGQRELIIGDRGTGKTSIAIDTIINQKGKGVICVYVAIGQKASTVASTIEMLREKGALEYTIIVSANASEPAPMLYIAPYSGATMAEYFMYEEGKATLVVYDDLSKQAVAYRQMSLLLRRPPGREAYPGDVFYLHSRLLERAAKLDDKFGGGSMTALPIIETQEGEVSAYIPTNVISITDGQIYLQSNLFASGLRPAVDVGISVSRVGSAAQIKAMKKVAGTLKSDLAQFRDLEAFAQLGTELDPVTQAQLDRGYRVLEILKQPNNSPTPVEEQVISIFAVTKGFMDVVPTAKVREFEAFLLKTMREQHPEILEEIRTAKEVKQEAALQKTIKSIVEHFLAKNN.

169 to 176 (GDRGTGKT) is an ATP binding site.

This sequence belongs to the ATPase alpha/beta chains family. F-type ATPases have 2 components, CF(1) - the catalytic core - and CF(0) - the membrane proton channel. CF(1) has five subunits: alpha(3), beta(3), gamma(1), delta(1), epsilon(1). CF(0) has three main subunits: a(1), b(2) and c(9-12). The alpha and beta chains form an alternating ring which encloses part of the gamma chain. CF(1) is attached to CF(0) by a central stalk formed by the gamma and epsilon chains, while a peripheral stalk is formed by the delta and b chains.

Its subcellular location is the cell inner membrane. It catalyses the reaction ATP + H2O + 4 H(+)(in) = ADP + phosphate + 5 H(+)(out). Functionally, produces ATP from ADP in the presence of a proton gradient across the membrane. The alpha chain is a regulatory subunit. The sequence is that of ATP synthase subunit alpha from Leptospira biflexa serovar Patoc (strain Patoc 1 / Ames).